Consider the following 196-residue polypeptide: Nucleoid occlusion factor SlmA (196 aa).

Residues 7–68 (SNRREEILQA…GLIEFIEEAL (62 aa)) enclose the HTH tetR-type domain. The segment at residues 31-50 (TTAKLAQQVGVSEAALYRHF) is a DNA-binding region (H-T-H motif). Residues 65–142 (EEALMSRINR…QLRQILRERK (78 aa)) adopt a coiled-coil conformation.

The protein belongs to the nucleoid occlusion factor SlmA family. Homodimer. Interacts with FtsZ.

The protein resides in the cytoplasm. It localises to the nucleoid. In terms of biological role, required for nucleoid occlusion (NO) phenomenon, which prevents Z-ring formation and cell division over the nucleoid. Acts as a DNA-associated cell division inhibitor that binds simultaneously chromosomal DNA and FtsZ, and disrupts the assembly of FtsZ polymers. SlmA-DNA-binding sequences (SBS) are dispersed on non-Ter regions of the chromosome, preventing FtsZ polymerization at these regions. The polypeptide is Nucleoid occlusion factor SlmA (Vibrio vulnificus (strain CMCP6)).